A 99-amino-acid polypeptide reads, in one-letter code: Small ribosomal subunit protein uS14 (99 aa).

Belongs to the universal ribosomal protein uS14 family. As to quaternary structure, part of the 30S ribosomal subunit. Contacts proteins S3 and S10.

In terms of biological role, binds 16S rRNA, required for the assembly of 30S particles and may also be responsible for determining the conformation of the 16S rRNA at the A site. The sequence is that of Small ribosomal subunit protein uS14 from Bacteroides fragilis (strain ATCC 25285 / DSM 2151 / CCUG 4856 / JCM 11019 / LMG 10263 / NCTC 9343 / Onslow / VPI 2553 / EN-2).